The sequence spans 729 residues: Fatty acid oxidation complex subunit alpha (729 aa).

An enoyl-CoA hydratase/isomerase region spans residues 1-189 (MLYKGDTLYL…KIGLVDGVVK (189 aa)). Asp296 serves as a coordination point for substrate. Residues 311-729 (ETPKQAAVLG…ARPVGDLKTA (419 aa)) form a 3-hydroxyacyl-CoA dehydrogenase region. Residues Met324, Asp343, 400–402 (VVE), Lys407, and Ser429 contribute to the NAD(+) site. His450 functions as the For 3-hydroxyacyl-CoA dehydrogenase activity in the catalytic mechanism. Asn453 is a binding site for NAD(+). Residues Asn500 and Tyr660 each coordinate substrate. Residues 708–729 (RHNEPYYPPVEPARPVGDLKTA) are disordered.

The protein in the N-terminal section; belongs to the enoyl-CoA hydratase/isomerase family. In the C-terminal section; belongs to the 3-hydroxyacyl-CoA dehydrogenase family. In terms of assembly, heterotetramer of two alpha chains (FadB) and two beta chains (FadA).

The catalysed reaction is a (3S)-3-hydroxyacyl-CoA + NAD(+) = a 3-oxoacyl-CoA + NADH + H(+). The enzyme catalyses a (3S)-3-hydroxyacyl-CoA = a (2E)-enoyl-CoA + H2O. It catalyses the reaction a 4-saturated-(3S)-3-hydroxyacyl-CoA = a (3E)-enoyl-CoA + H2O. It carries out the reaction (3S)-3-hydroxybutanoyl-CoA = (3R)-3-hydroxybutanoyl-CoA. The catalysed reaction is a (3Z)-enoyl-CoA = a 4-saturated (2E)-enoyl-CoA. The enzyme catalyses a (3E)-enoyl-CoA = a 4-saturated (2E)-enoyl-CoA. It participates in lipid metabolism; fatty acid beta-oxidation. Its function is as follows. Involved in the aerobic and anaerobic degradation of long-chain fatty acids via beta-oxidation cycle. Catalyzes the formation of 3-oxoacyl-CoA from enoyl-CoA via L-3-hydroxyacyl-CoA. It can also use D-3-hydroxyacyl-CoA and cis-3-enoyl-CoA as substrate. In Escherichia coli O8 (strain IAI1), this protein is Fatty acid oxidation complex subunit alpha.